Reading from the N-terminus, the 314-residue chain is Lipoyl synthase (314 aa).

Positions 55, 60, 66, 81, 85, 88, and 292 each coordinate [4Fe-4S] cluster. One can recognise a Radical SAM core domain in the interval 67–281; it reads WEDREATFLI…SAYAEGLGFA (215 aa).

It belongs to the radical SAM superfamily. Lipoyl synthase family. Requires [4Fe-4S] cluster as cofactor.

The protein localises to the cytoplasm. It catalyses the reaction [[Fe-S] cluster scaffold protein carrying a second [4Fe-4S](2+) cluster] + N(6)-octanoyl-L-lysyl-[protein] + 2 oxidized [2Fe-2S]-[ferredoxin] + 2 S-adenosyl-L-methionine + 4 H(+) = [[Fe-S] cluster scaffold protein] + N(6)-[(R)-dihydrolipoyl]-L-lysyl-[protein] + 4 Fe(3+) + 2 hydrogen sulfide + 2 5'-deoxyadenosine + 2 L-methionine + 2 reduced [2Fe-2S]-[ferredoxin]. Its pathway is protein modification; protein lipoylation via endogenous pathway; protein N(6)-(lipoyl)lysine from octanoyl-[acyl-carrier-protein]: step 2/2. Catalyzes the radical-mediated insertion of two sulfur atoms into the C-6 and C-8 positions of the octanoyl moiety bound to the lipoyl domains of lipoate-dependent enzymes, thereby converting the octanoylated domains into lipoylated derivatives. This Mycolicibacterium smegmatis (strain ATCC 700084 / mc(2)155) (Mycobacterium smegmatis) protein is Lipoyl synthase.